We begin with the raw amino-acid sequence, 371 residues long: Aspartate-semialdehyde dehydrogenase (371 aa).

NADP(+) is bound by residues 10 to 13 (RGMV), 37 to 38 (TS), and Gln74. Arg103 provides a ligand contact to phosphate. The active-site Acyl-thioester intermediate is the Cys136. Gln163 provides a ligand contact to substrate. Ser166 contacts NADP(+). Glu243 is a substrate binding site. Residue Lys246 participates in phosphate binding. Position 270 (Arg270) interacts with substrate. His277 (proton acceptor) is an active-site residue. An NADP(+)-binding site is contributed by Gln353.

This sequence belongs to the aspartate-semialdehyde dehydrogenase family. In terms of assembly, homodimer.

It catalyses the reaction L-aspartate 4-semialdehyde + phosphate + NADP(+) = 4-phospho-L-aspartate + NADPH + H(+). It participates in amino-acid biosynthesis; L-lysine biosynthesis via DAP pathway; (S)-tetrahydrodipicolinate from L-aspartate: step 2/4. The protein operates within amino-acid biosynthesis; L-methionine biosynthesis via de novo pathway; L-homoserine from L-aspartate: step 2/3. It functions in the pathway amino-acid biosynthesis; L-threonine biosynthesis; L-threonine from L-aspartate: step 2/5. Catalyzes the NADPH-dependent formation of L-aspartate-semialdehyde (L-ASA) by the reductive dephosphorylation of L-aspartyl-4-phosphate. The polypeptide is Aspartate-semialdehyde dehydrogenase (Haemophilus influenzae (strain ATCC 51907 / DSM 11121 / KW20 / Rd)).